We begin with the raw amino-acid sequence, 111 residues long: MRSSRFLVLMVSLALVTLVASEGVKGNTEKPGVCPADNVRCIKSDPPQCHTDQDCQGIRKCCYLHCGFKCVIPVKELEEGGSKDEDVSRPCPESGWEVKPPGFFSTRCPQK.

Residues 1–23 form the signal peptide; the sequence is MRSSRFLVLMVSLALVTLVASEG. The WAP domain maps to 27–74; the sequence is NTEKPGVCPADNVRCIKSDPPQCHTDQDCQGIRKCCYLHCGFKCVIPV. Intrachain disulfides connect Cys34–Cys62, Cys41–Cys66, Cys49–Cys61, and Cys55–Cys70.

The protein localises to the secreted. Antibacterial protein. Putative acid-stable proteinase inhibitor. The protein is WAP four-disulfide core domain protein 12 (WFDC12) of Saimiri boliviensis boliviensis (Bolivian squirrel monkey).